Consider the following 188-residue polypeptide: Gamma-glutamylcyclotransferase (188 aa).

Residue Y19–Y22 coordinates substrate. E98 (proton acceptor) is an active-site residue. S173 bears the Phosphoserine mark.

It belongs to the gamma-glutamylcyclotransferase family. Homodimer.

The enzyme catalyses an alpha-(gamma-L-glutamyl)-L-amino acid = 5-oxo-L-proline + an L-alpha-amino acid. Its function is as follows. Catalyzes the formation of 5-oxoproline from gamma-glutamyl dipeptides and may play a significant role in glutathione homeostasis. Induces release of cytochrome c from mitochondria with resultant induction of apoptosis. The sequence is that of Gamma-glutamylcyclotransferase (Ggct) from Mus musculus (Mouse).